Reading from the N-terminus, the 92-residue chain is Large ribosomal subunit protein eL31 (92 aa).

The protein belongs to the eukaryotic ribosomal protein eL31 family.

This Halorubrum lacusprofundi (strain ATCC 49239 / DSM 5036 / JCM 8891 / ACAM 34) protein is Large ribosomal subunit protein eL31.